Reading from the N-terminus, the 145-residue chain is D-aminoacyl-tRNA deacylase (145 aa).

The short motif at 137-138 is the Gly-cisPro motif, important for rejection of L-amino acids element; it reads GP.

Belongs to the DTD family. Homodimer.

The protein resides in the cytoplasm. The enzyme catalyses glycyl-tRNA(Ala) + H2O = tRNA(Ala) + glycine + H(+). The catalysed reaction is a D-aminoacyl-tRNA + H2O = a tRNA + a D-alpha-amino acid + H(+). An aminoacyl-tRNA editing enzyme that deacylates mischarged D-aminoacyl-tRNAs. Also deacylates mischarged glycyl-tRNA(Ala), protecting cells against glycine mischarging by AlaRS. Acts via tRNA-based rather than protein-based catalysis; rejects L-amino acids rather than detecting D-amino acids in the active site. By recycling D-aminoacyl-tRNA to D-amino acids and free tRNA molecules, this enzyme counteracts the toxicity associated with the formation of D-aminoacyl-tRNA entities in vivo and helps enforce protein L-homochirality. This Francisella tularensis subsp. novicida (strain U112) protein is D-aminoacyl-tRNA deacylase.